Consider the following 73-residue polypeptide: Disintegrin molossin (73 aa).

One can recognise a Disintegrin domain in the interval 1-73; it reads EAGIECDCGS…ADCPRNRFHA (73 aa). 6 disulfides stabilise this stretch: C6-C21, C8-C16, C15-C38, C29-C35, C34-C59, and C47-C66. The short motif at 51 to 53 is the Cell attachment site element; the sequence is RGD.

This sequence belongs to the venom metalloproteinase (M12B) family. P-II subfamily. P-IIa sub-subfamily. In terms of assembly, monomer (disintegrin). Expressed by the venom gland.

The protein localises to the secreted. In terms of biological role, inhibits fibrinogen interaction with platelets. Acts by binding to alpha-IIb/beta-3 (ITGA2B/ITGB3) on the platelet surface and inhibits aggregation induced by ADP, thrombin, platelet-activating factor and collagen. This Crotalus molossus molossus (Northern black-tailed rattlesnake) protein is Disintegrin molossin.